We begin with the raw amino-acid sequence, 605 residues long: MQTSMVSAKVSIWLVCSVICSSLVRATQSVCSSQNTATTDGVRNQFQSNGWCSNNCAGHQFAIVQGFMCWCSDSEPSTQTSVGDCSGTCPGYGYEDCGNADKDLFGYIYLGQTPLSSVQSVETSTESSVYVSSSSITSSSSTSIVDTTTISPTLTSTSTTPLTTASTSTTPSTDITSALPTTTSTKLSTSIPTSTTSSTSTTTSTSSSTSTTVSVTSSTSTTTSTTSSTLISTSTSSSSSSTPTTTSSAPISTSTTSSTSTSTSTTSPTSSSAPTSSSNTTPTSTTFTTTSPSTAPSSTTVTYTSTTASPITSTITSVNLQTSLKYSVITVTSVHTMDTNISEITSRYLTMKKVITQIYSSTLGATPTSAVATTSASVGGRITNNNNSNTTNSNTPTNKSTEKKGYWDSPGKIAATFVVVGVVCLVIICILIYLIHHYRTRPARKAQDFENEYQSKFYQSKYPNEVTTTTLHTPSPSSNSTFSTPRLIYTDEKGQIMSESPSPRQSTYSLTAGSPPNDPSTLASPFHDPILPRRTSTFLHSPIQKQHEKMESNVTLGEDTVLVDQRLDPSKMLNTLANDDATNHSTISLSDNVDYSRRVLRLMNE.

An N-terminal signal peptide occupies residues 1-26; that stretch reads MQTSMVSAKVSIWLVCSVICSSLVRA. The WSC domain occupies 27 to 110; that stretch reads TQSVCSSQNT…DKDLFGYIYL (84 aa). The segment at 151–305 is disordered; sequence SPTLTSTSTT…PSSTTVTYTS (155 aa). Residues asparagine 340, asparagine 386, asparagine 389, and asparagine 398 are each glycosylated (N-linked (GlcNAc...) asparagine). Positions 381-399 are enriched in low complexity; it reads RITNNNNSNTTNSNTPTNK. A disordered region spans residues 381–404; sequence RITNNNNSNTTNSNTPTNKSTEKK. Residues 415–435 form a helical membrane-spanning segment; the sequence is ATFVVVGVVCLVIICILIYLI. N-linked (GlcNAc...) asparagine glycosylation is present at asparagine 479. The tract at residues 494 to 521 is disordered; that stretch reads GQIMSESPSPRQSTYSLTAGSPPNDPST. The span at 497 to 521 shows a compositional bias: polar residues; that stretch reads MSESPSPRQSTYSLTAGSPPNDPST. Residues asparagine 553 and asparagine 583 are each glycosylated (N-linked (GlcNAc...) asparagine).

It is found in the membrane. The chain is Cell wall integrity and stress response component 4 (WSC4) from Saccharomyces cerevisiae (strain ATCC 204508 / S288c) (Baker's yeast).